Here is a 490-residue protein sequence, read N- to C-terminus: Cytochrome P450 71A22 (490 aa).

A helical membrane pass occupies residues 2-22 (ESMIRIILLSLIIFITILFFI). Cys-432 contacts heme.

It belongs to the cytochrome P450 family. Requires heme as cofactor.

It localises to the membrane. The protein is Cytochrome P450 71A22 (CYP71A22) of Arabidopsis thaliana (Mouse-ear cress).